A 98-amino-acid chain; its full sequence is ATP-dependent Clp protease adapter protein ClpS (98 aa).

It belongs to the ClpS family. In terms of assembly, binds to the N-terminal domain of the chaperone ClpA.

Its function is as follows. Involved in the modulation of the specificity of the ClpAP-mediated ATP-dependent protein degradation. The protein is ATP-dependent Clp protease adapter protein ClpS of Synechocystis sp. (strain ATCC 27184 / PCC 6803 / Kazusa).